Consider the following 380-residue polypeptide: Cytochrome b (380 aa).

The next 4 membrane-spanning stretches (helical) occupy residues 34-54 (FGSL…LLAM), 78-99 (WLIR…YLHI), 114-134 (WNVG…GYVL), and 179-199 (FFAL…VHLT). Heme b is bound by residues H84 and H98. Heme b-binding residues include H183 and H197. An a ubiquinone-binding site is contributed by H202. Transmembrane regions (helical) follow at residues 227–247 (IKDI…ALFS), 289–309 (LGGV…PLLH), 321–341 (LSQI…WIGS), and 348–368 (FIII…VLFP).

The protein belongs to the cytochrome b family. The cytochrome bc1 complex contains 11 subunits: 3 respiratory subunits (MT-CYB, CYC1 and UQCRFS1), 2 core proteins (UQCRC1 and UQCRC2) and 6 low-molecular weight proteins (UQCRH/QCR6, UQCRB/QCR7, UQCRQ/QCR8, UQCR10/QCR9, UQCR11/QCR10 and a cleavage product of UQCRFS1). This cytochrome bc1 complex then forms a dimer. Heme b serves as cofactor.

It is found in the mitochondrion inner membrane. Component of the ubiquinol-cytochrome c reductase complex (complex III or cytochrome b-c1 complex) that is part of the mitochondrial respiratory chain. The b-c1 complex mediates electron transfer from ubiquinol to cytochrome c. Contributes to the generation of a proton gradient across the mitochondrial membrane that is then used for ATP synthesis. In Vireo olivaceus (Red-eyed vireo), this protein is Cytochrome b (MT-CYB).